Reading from the N-terminus, the 348-residue chain is Neutral peroxidase (348 aa).

The N-terminal stretch at methionine 1–alanine 20 is a signal peptide. Residues glycine 21–serine 67 constitute a propeptide that is removed on maturation. Disulfide bonds link cysteine 71/cysteine 149, cysteine 102/cysteine 107, cysteine 156/cysteine 344, and cysteine 235/cysteine 256. Residue histidine 100 is the Proton acceptor of the active site. 4 residues coordinate Ca(2+): aspartate 101, valine 104, glycine 106, and aspartate 108. 5 N-linked (GlcNAc...) asparagine glycosylation sites follow: asparagine 114, asparagine 118, asparagine 173, asparagine 177, and asparagine 189. Proline 198 contacts substrate. Asparagine 203 carries an N-linked (GlcNAc...) asparagine glycan. Heme b is bound at residue histidine 228. Position 229 (threonine 229) interacts with Ca(2+). Asparagine 247 and asparagine 261 each carry an N-linked (GlcNAc...) asparagine glycan. Positions 269, 271, and 276 each coordinate Ca(2+). An N-linked (GlcNAc...) asparagine glycan is attached at asparagine 300.

It belongs to the peroxidase family. Classical plant (class III) peroxidase subfamily. Requires Ca(2+) as cofactor. Heme b is required as a cofactor. As to expression, highly expressed in suspension cultured cells. Weak expression also found in the stems of intact plants. No expression in leaf, tuberous root and non-tuberous root.

The protein resides in the secreted. It carries out the reaction 2 a phenolic donor + H2O2 = 2 a phenolic radical donor + 2 H2O. In terms of biological role, removal of H(2)O(2), oxidation of toxic reductants, biosynthesis and degradation of lignin, suberization, auxin catabolism, response to environmental stresses such as wounding, pathogen attack and oxidative stress. These functions might be dependent on each isozyme/isoform in each plant tissue. Functionally, may contribute to protection against cold-induced oxidative stress. This chain is Neutral peroxidase, found in Ipomoea batatas (Sweet potato).